A 496-amino-acid chain; its full sequence is Probable cytosol aminopeptidase (496 aa).

Positions 266 and 271 each coordinate Mn(2+). Lys278 is a catalytic residue. Mn(2+)-binding residues include Asp289, Asp348, and Glu350. Arg352 is a catalytic residue.

This sequence belongs to the peptidase M17 family. Requires Mn(2+) as cofactor.

It localises to the cytoplasm. The enzyme catalyses Release of an N-terminal amino acid, Xaa-|-Yaa-, in which Xaa is preferably Leu, but may be other amino acids including Pro although not Arg or Lys, and Yaa may be Pro. Amino acid amides and methyl esters are also readily hydrolyzed, but rates on arylamides are exceedingly low.. It carries out the reaction Release of an N-terminal amino acid, preferentially leucine, but not glutamic or aspartic acids.. Its function is as follows. Presumably involved in the processing and regular turnover of intracellular proteins. Catalyzes the removal of unsubstituted N-terminal amino acids from various peptides. The polypeptide is Probable cytosol aminopeptidase (Azotobacter vinelandii (strain DJ / ATCC BAA-1303)).